The chain runs to 150 residues: Putative pre-16S rRNA nuclease (150 aa).

This sequence belongs to the YqgF nuclease family.

The protein resides in the cytoplasm. Its function is as follows. Could be a nuclease involved in processing of the 5'-end of pre-16S rRNA. In Chlamydia felis (strain Fe/C-56) (Chlamydophila felis), this protein is Putative pre-16S rRNA nuclease.